A 339-amino-acid polypeptide reads, in one-letter code: Beta-ketoacyl-[acyl-carrier-protein] synthase III (339 aa).

Catalysis depends on residues cysteine 121 and histidine 257. An ACP-binding region spans residues 258–262; sequence QANLR. Asparagine 288 is an active-site residue.

It belongs to the thiolase-like superfamily. FabH family. Homodimer.

It is found in the cytoplasm. The enzyme catalyses malonyl-[ACP] + propanoyl-CoA + H(+) = 3-oxopentanoyl-[ACP] + CO2 + CoA. The catalysed reaction is 2-methylpropanoyl-CoA + malonyl-[ACP] + H(+) = 4-methyl-3-oxopentanoyl-[ACP] + CO2 + CoA. It carries out the reaction malonyl-[ACP] + acetyl-CoA + H(+) = 3-oxobutanoyl-[ACP] + CO2 + CoA. It catalyses the reaction butanoyl-CoA + malonyl-[ACP] + H(+) = 3-oxohexanoyl-[ACP] + CO2 + CoA. It functions in the pathway lipid metabolism; fatty acid biosynthesis. Functionally, catalyzes the condensation reaction of fatty acid synthesis by the addition to an acyl acceptor of two carbons from malonyl-ACP. Catalyzes the first condensation reaction which initiates fatty acid synthesis and may therefore play a role in governing the total rate of fatty acid production. Possesses both acetoacetyl-ACP synthase and acetyl transacylase activities. Propionyl-CoA and isobutyryl-CoA were the two most preferred substrates, although acetyl-CoA and butyryl-CoA could also be accepted and elongated. Involved in the biosynthesis of R1128 polyketide. The polypeptide is Beta-ketoacyl-[acyl-carrier-protein] synthase III (Streptomyces lividans).